The primary structure comprises 302 residues: uncharacterized protein (302 aa).

N32, N39, and N94 each carry an N-linked (GlcNAc...) asparagine glycan. Positions 80–115 (CRDTDMNCAVWVATNTSDCENVELVNSHCPRTCQTC) constitute a ShKT domain. 3 disulfide bridges follow: C80–C115, C87–C108, and C98–C112. Residue N181 is glycosylated (N-linked (GlcNAc...) asparagine).

This is an uncharacterized protein from Caenorhabditis elegans.